Reading from the N-terminus, the 2527-residue chain is Highly reducing polyketide synthase poxF (2527 aa).

The region spanning 20-445 (VMPIAIIGMA…GANAHVIVES (426 aa)) is the Ketosynthase family 3 (KS3) domain. Residues C193, H328, and H368 each act as for beta-ketoacyl synthase activity in the active site. The interval 560 to 882 (VFTGQGAQWF…TYASCLSRGQ (323 aa)) is malonyl-CoA:ACP transacylase (MAT) domain. Residues 951-1086 (HDLLGVPAAG…GLCCTPSPAQ (136 aa)) form an N-terminal hotdog fold region. Positions 951–1243 (HDLLGVPAAG…SVRVINNAGT (293 aa)) are dehydratase (DH) domain. A PKS/mFAS DH domain is found at 951-1270 (HDLLGVPAAG…CQSLGSSAVV (320 aa)). The Proton acceptor; for dehydratase activity role is filled by H983. The segment at 1108–1270 (AWRILNPADT…CQSLGSSAVV (163 aa)) is C-terminal hotdog fold. The active-site Proton donor; for dehydratase activity is the D1174. Residues 1406–1587 (EDQAEWSSVS…RLLAKAGFEP (182 aa)) form a methyltransferase (CMet) domain region. Residues 1823–2137 (GLLNSLVFTE…TGKHMGKIVL (315 aa)) are enoyl reductase (ER) (ER) domain. A ketoreductase (KR) domain region spans residues 2162 to 2339 (TYLLVGGVGG…AVSIDLGMVS (178 aa)). Positions 2445–2522 (EVTTLIQSAL…GLAGQMAKKS (78 aa)) constitute a Carrier domain. S2482 is modified (O-(pantetheine 4'-phosphoryl)serine).

It functions in the pathway secondary metabolite biosynthesis. Its function is as follows. Highly reducing polyketide synthase; part of the gene cluster that mediates the biosynthesis of oxaleimides, cytotoxic compounds containing an unusual disubstituted succinimide moiety. The first step of the pathway is provided by the HR-PKS poxF that serves in a new mode of collaborative biosynthesis with the PKS-NRPS poxE, by providing the olefin containing amino acid substrate via the synthesis of an ACP-bound dec-4-enoate. The cytochrome P450 monooxygenase poxM-catalyzed oxidation at the alpha-position creates the enzyme-bound 2-hydroxydec-4-enoyl-ACP thioester, which may be prone to spontaneous hydrolysis to yield 2-hydroxydec-4-enoic acid due to increased electrophilicity of the carbonyl. 2-hydroxydec-4-enoic acid can then be further oxidized by poxM to yield the alpha-ketoacid 2-oxodec-4-enoicacid, which is reductively aminated by the aminotransferase poxL to yield (S,E)-2-aminodec-4-enoic acid. The Hybrid PKS-NRPS synthetase poxE then performs condensation between the octaketide product of its PKS modules and the amino group of (S,E)-2-aminodec-4-enoic acid which is activated and incorporated by the adenylation domain. The resulting aminoacyl product can be cyclized by the Diels-Alderase PoxQ and reductively released by the reductive (R) domain of poxE to yield an aldehyde intermediate. The released aldehyde is then substrate for a Knoevenagel condensation by the hydrolyase poxO followed by an oxidation at the 5-position of the pyrrolidone ring. The presence of the olefin from the amino acid building block allows for migration of the substituted allyl group to occur. This allylic transposition reaction takes place in a conjugate addition, semipinacol-like fashion to yield a succinimide intermediate. Iterative two-electron oxidations of the C7 methyl of the succinimide intermediate to the carboxylic acid can be catalyzed by one of two remaining cytochrome P450 monooxygenasess poxC or poxD to yield oxaleimide A. Subsequent oxidation yields the maleimide scaffold oxaleimide I. Both oxaleimide A and oxaleimide I can undergo oxidative modifications in the decalin ring to yield the series of products oxaleimides B to H. The sequence is that of Highly reducing polyketide synthase poxF from Penicillium oxalicum.